The chain runs to 528 residues: Glucose-6-phosphate isomerase (528 aa).

Catalysis depends on Glu-322, which acts as the Proton donor. Active-site residues include His-351 and Lys-455.

This sequence belongs to the GPI family.

The protein localises to the cytoplasm. It carries out the reaction alpha-D-glucose 6-phosphate = beta-D-fructose 6-phosphate. Its pathway is carbohydrate biosynthesis; gluconeogenesis. The protein operates within carbohydrate degradation; glycolysis; D-glyceraldehyde 3-phosphate and glycerone phosphate from D-glucose: step 2/4. In terms of biological role, catalyzes the reversible isomerization of glucose-6-phosphate to fructose-6-phosphate. This chain is Glucose-6-phosphate isomerase, found in Synechococcus elongatus (strain ATCC 33912 / PCC 7942 / FACHB-805) (Anacystis nidulans R2).